A 230-amino-acid chain; its full sequence is Nicotinamide riboside kinase (230 aa).

Residue 12 to 20 (GASCSGKST) participates in ATP binding. Positions 19 and 38 each coordinate Mg(2+). Asp38 acts as the Proton acceptor in catalysis. Substrate is bound by residues 38-41 (DDFY) and 56-57 (WD). ATP is bound at residue Arg153. Substrate-binding positions include Arg154 and 159–160 (GY). ATP contacts are provided by residues 157–159 (RTG) and 203–205 (RIQ).

Belongs to the uridine kinase family. NRK subfamily.

The enzyme catalyses beta-nicotinamide D-riboside + ATP = beta-nicotinamide D-ribonucleotide + ADP + H(+). It carries out the reaction beta-D-ribosylnicotinate + ATP = nicotinate beta-D-ribonucleotide + ADP + H(+). It functions in the pathway cofactor biosynthesis; NAD(+) biosynthesis. Catalyzes the phosphorylation of nicotinamide riboside (NR) and nicotinic acid riboside (NaR) to form nicotinamide mononucleotide (NMN) and nicotinic acid mononucleotide (NaMN). The polypeptide is Nicotinamide riboside kinase (nrk1) (Schizosaccharomyces pombe (strain 972 / ATCC 24843) (Fission yeast)).